A 277-amino-acid chain; its full sequence is S-formylglutathione hydrolase FrmB (277 aa).

Active-site charge relay system residues include Ser145, Asp221, and His254.

Belongs to the esterase D family.

The catalysed reaction is S-formylglutathione + H2O = formate + glutathione + H(+). Functionally, serine hydrolase involved in the detoxification of formaldehyde. Hydrolyzes S-formylglutathione to glutathione and formate. The polypeptide is S-formylglutathione hydrolase FrmB (frmB) (Escherichia coli (strain SMS-3-5 / SECEC)).